The sequence spans 378 residues: Chaperone protein DnaJ (378 aa).

The J domain occupies 5–70; it reads DFYEVLGLSK…QKRAAYDQYG (66 aa). The CR-type zinc-finger motif lies at 133–211; it reads GITKEIRIPT…CHGDGRVERY (79 aa). 8 residues coordinate Zn(2+): Cys146, Cys149, Cys163, Cys166, Cys185, Cys188, Cys199, and Cys202. CXXCXGXG motif repeat units lie at residues 146 to 153, 163 to 170, 185 to 192, and 199 to 206; these read CDKCHGSG, CSTCHGAG, CPTCHGRG, and CSKCHGDG.

Belongs to the DnaJ family. As to quaternary structure, homodimer. The cofactor is Zn(2+).

It is found in the cytoplasm. Participates actively in the response to hyperosmotic and heat shock by preventing the aggregation of stress-denatured proteins and by disaggregating proteins, also in an autonomous, DnaK-independent fashion. Unfolded proteins bind initially to DnaJ; upon interaction with the DnaJ-bound protein, DnaK hydrolyzes its bound ATP, resulting in the formation of a stable complex. GrpE releases ADP from DnaK; ATP binding to DnaK triggers the release of the substrate protein, thus completing the reaction cycle. Several rounds of ATP-dependent interactions between DnaJ, DnaK and GrpE are required for fully efficient folding. Also involved, together with DnaK and GrpE, in the DNA replication of plasmids through activation of initiation proteins. The sequence is that of Chaperone protein DnaJ from Proteus mirabilis (strain HI4320).